The following is a 339-amino-acid chain: Dihydroorotase (339 aa).

Zn(2+) contacts are provided by histidine 12 and histidine 14. Substrate is bound by residues 14 to 16 (HVR) and asparagine 40. Zn(2+)-binding residues include lysine 94, histidine 133, histidine 167, and aspartate 239. Lysine 94 is modified (N6-carboxylysine). Histidine 133 contributes to the substrate binding site. Aspartate 239 is an active-site residue. Substrate is bound by residues histidine 243 and alanine 255.

The protein belongs to the metallo-dependent hydrolases superfamily. DHOase family. Class II DHOase subfamily. In terms of assembly, homodimer. Zn(2+) is required as a cofactor.

The catalysed reaction is (S)-dihydroorotate + H2O = N-carbamoyl-L-aspartate + H(+). Its pathway is pyrimidine metabolism; UMP biosynthesis via de novo pathway; (S)-dihydroorotate from bicarbonate: step 3/3. Catalyzes the reversible cyclization of carbamoyl aspartate to dihydroorotate. This Helicobacter pylori (strain P12) protein is Dihydroorotase.